Here is a 456-residue protein sequence, read N- to C-terminus: Phospholipase A1 member A (456 aa).

The N-terminal stretch at 1 to 24 (MCPGLWGTCFWLWGSLLWLSIGRS) is a signal peptide. Catalysis depends on serine 166, which acts as the Nucleophile. Aspartate 190 (charge relay system) is an active-site residue. A disulfide bridge links cysteine 245 with cysteine 258. Histidine 260 functions as the Charge relay system in the catalytic mechanism. 2 cysteine pairs are disulfide-bonded: cysteine 282-cysteine 293 and cysteine 296-cysteine 304. Asparagine 365 is a glycosylation site (N-linked (GlcNAc...) asparagine).

This sequence belongs to the AB hydrolase superfamily. Lipase family.

The protein localises to the secreted. It catalyses the reaction a 1,2-diacyl-sn-glycero-3-phospho-L-serine + H2O = a 2-acyl-sn-glycero-3-phospho-L-serine + a fatty acid + H(+). It carries out the reaction 1,2-di-(9Z)-octadecenoyl-sn-glycero-3-phospho-L-serine + H2O = 2-(9Z-octadecenoyl)-sn-glycero-3-phospho-L-serine + (9Z)-octadecenoate + H(+). The enzyme catalyses 1-hexadecanoyl-2-(5Z,8Z,11Z,14Z-eicosatetraenoyl)-sn-glycero-3-phospho-L-serine + H2O = 2-(5Z,8Z,11Z,14Z)-eicosatetraenoyl-sn-glycero-3-phospho-L-serine + hexadecanoate + H(+). The catalysed reaction is a 1-acyl-sn-glycero-3-phospho-L-serine + H2O = sn-glycero-3-phospho-L-serine + a fatty acid + H(+). It catalyses the reaction 1-(9Z-octadecenoyl)-sn-glycero-3-phospho-L-serine + H2O = sn-glycero-3-phospho-L-serine + (9Z)-octadecenoate + H(+). Hydrolyzes the ester bond of the acyl group attached at the sn-1 position of phosphatidylserines (phospholipase A1 activity) and 1-acyl-2-lysophosphatidylserines (lysophospholipase activity) in the pathway of phosphatidylserines acyl chain remodeling. Cleaves phosphatidylserines exposed on the outer leaflet of the plasma membrane of apoptotic cells producing 2-acyl-1-lysophosphatidylserines, which in turn enhance mast cell activation and histamine production. Has no activity toward other glycerophospholipids including phosphatidylcholines, phosphatidylethanolamines, phosphatidic acids or phosphatidylinositols, or glycerolipids such as triolein. This is Phospholipase A1 member A from Rattus norvegicus (Rat).